A 197-amino-acid chain; its full sequence is Superoxide dismutase [Fe] (197 aa).

Fe cation contacts are provided by His26, His75, Asp157, and His161.

The protein belongs to the iron/manganese superoxide dismutase family. In terms of assembly, homotetramer. Fe cation is required as a cofactor.

It carries out the reaction 2 superoxide + 2 H(+) = H2O2 + O2. Destroys superoxide anion radicals which are normally produced within the cells and which are toxic to biological systems. The sequence is that of Superoxide dismutase [Fe] from Cupriavidus metallidurans (strain ATCC 43123 / DSM 2839 / NBRC 102507 / CH34) (Ralstonia metallidurans).